The following is a 425-amino-acid chain: Phosphomethylpyrimidine synthase (425 aa).

Substrate is bound by residues Met94, Tyr123, His162, 184–186, 225–228, and Glu264; these read SRG and NGMR. A Zn(2+)-binding site is contributed by His268. Tyr291 is a substrate binding site. Zn(2+) is bound at residue His332. 3 residues coordinate [4Fe-4S] cluster: Cys407, Cys410, and Cys414.

The protein belongs to the ThiC family. The cofactor is [4Fe-4S] cluster.

It carries out the reaction 5-amino-1-(5-phospho-beta-D-ribosyl)imidazole + S-adenosyl-L-methionine = 4-amino-2-methyl-5-(phosphooxymethyl)pyrimidine + CO + 5'-deoxyadenosine + formate + L-methionine + 3 H(+). The protein operates within cofactor biosynthesis; thiamine diphosphate biosynthesis. Catalyzes the synthesis of the hydroxymethylpyrimidine phosphate (HMP-P) moiety of thiamine from aminoimidazole ribotide (AIR) in a radical S-adenosyl-L-methionine (SAM)-dependent reaction. This Methanocorpusculum labreanum (strain ATCC 43576 / DSM 4855 / Z) protein is Phosphomethylpyrimidine synthase.